We begin with the raw amino-acid sequence, 589 residues long: Serine/threonine-protein phosphatase 2A 65 kDa regulatory subunit A alpha isoform (589 aa).

Ala-2 is subject to N-acetylalanine. 15 HEAT repeats span residues 8–46 (DSLY…GVER), 47–84 (TRSE…GGPE), 85–123 (YVHC…SPSD), 124–161 (LEAH…VSSA), 162–200 (VKAE…ELDN), 201–239 (VKSE…PQED), 240–278 (LEAL…GPEI), 279–321 (TKTD…RENV), 322–360 (IMTQ…GKDN), 361–399 (TIEH…GIRQ), 400–438 (LSQS…GVEF), 439–477 (FDEK…GKEW), 478–516 (AHAT…GQDI), 517–555 (TTKH…DNST), and 556–589 (LQSE…LSLA). Lys-280 is subject to N6-acetyllysine.

Belongs to the phosphatase 2A regulatory subunit A family. PP2A consists of a common heterodimeric core enzyme, composed of PPP2CA a 36 kDa catalytic subunit (subunit C) and PPP2R1A a 65 kDa constant regulatory subunit (PR65 or subunit A), that associates with a variety of regulatory subunits. Proteins that associate with the core dimer include three families of regulatory subunits B (the R2/B/PR55/B55, R3/B''/PR72/PR130/PR59 and R5/B'/B56 families), the 48 kDa variable regulatory subunit, viral proteins, and cell signaling molecules. Found in a complex with at least ARL2, PPP2CB, PPP2R1A, PPP2R2A, PPP2R5E and TBCD. Interacts with the PP2A C catalytic subunit PPP2CA. Interacts with the PP2A B subunit PPP2R2A. Interacts with the PP2A B subunit PPP2R5D. Interacts with FOXO1; the interaction dephosphorylates FOXO1 on AKT-mediated phosphorylation sites. Interacts with IPO9. Interacts with TP53 and SGO1. Interacts with PLA2G16; this interaction might decrease PP2A activity. Interacts with CTTNBP2NL. Interacts with GNA12; the interaction promotes protein phosphatase 2A activation causing dephosphorylation of MAPT. Interacts with CIP2A; this interaction stabilizes CIP2A. Interacts with PABIR1/FAM122A. Interacts with ADCY8; antagonizes interaction between ADCY8 and calmodulin. Interacts with CRTC3 (when phosphorylated at 'Ser-391'). Interacts with SPRY2. Part of the core of STRIPAK complexes composed of PP2A catalytic and scaffolding subunits, the striatins (PP2A regulatory subunits), the striatin-associated proteins MOB4, STRIP1 and STRIP2, PDCD10 and members of the STE20 kinases, such as STK24 and STK26. Component of the Integrator-PP2A (INTAC) complex, composed of the Integrator core complex and protein phosphatase 2A subunits PPP2CA and PPP2R1A.

The protein localises to the cytoplasm. It is found in the nucleus. The protein resides in the chromosome. Its subcellular location is the centromere. It localises to the lateral cell membrane. The protein localises to the cell projection. It is found in the dendrite. Functionally, the PR65 subunit of protein phosphatase 2A serves as a scaffolding molecule to coordinate the assembly of the catalytic subunit and a variable regulatory B subunit. Upon interaction with GNA12 promotes dephosphorylation of microtubule associated protein TAU/MAPT. Required for proper chromosome segregation and for centromeric localization of SGO1 in mitosis. Together with RACK1 adapter, mediates dephosphorylation of AKT1 at 'Ser-473', preventing AKT1 activation and AKT-mTOR signaling pathway. Dephosphorylation of AKT1 is essential for regulatory T-cells (Treg) homeostasis and stability. Part of the striatin-interacting phosphatase and kinase (STRIPAK) complexes. STRIPAK complexes have critical roles in protein (de)phosphorylation and are regulators of multiple signaling pathways including Hippo, MAPK, nuclear receptor and cytoskeleton remodeling. Different types of STRIPAK complexes are involved in a variety of biological processes such as cell growth, differentiation, apoptosis, metabolism and immune regulation. Key mediator of a quality checkpoint during transcription elongation as part of the Integrator-PP2A (INTAC) complex. The INTAC complex drives premature transcription termination of transcripts that are unfavorably configured for transcriptional elongation: within the INTAC complex, acts as a scaffolding subunit for PPP2CA, which catalyzes dephosphorylation of the C-terminal domain (CTD) of Pol II subunit POLR2A/RPB1 and SUPT5H/SPT5, thereby preventing transcriptional elongation. Regulates the recruitment of the SKA complex to kinetochores. The protein is Serine/threonine-protein phosphatase 2A 65 kDa regulatory subunit A alpha isoform (Ppp2r1a) of Mus musculus (Mouse).